Consider the following 434-residue polypeptide: Enolase (434 aa).

Substrate-binding residues include H158 and E167. Residue E210 is the Proton donor of the active site. Residues D245, E294, and D319 each contribute to the Mg(2+) site. Residues E294 and D319 each coordinate substrate. K344 acts as the Proton acceptor in catalysis. Residues S371–S374 and K395 contribute to the substrate site.

This sequence belongs to the enolase family. In terms of assembly, homodimer. Requires Mg(2+) as cofactor.

It is found in the cytoplasm. It carries out the reaction (2R)-2-phosphoglycerate = phosphoenolpyruvate + H2O. It participates in carbohydrate degradation; glycolysis; pyruvate from D-glyceraldehyde 3-phosphate: step 4/5. In Caenorhabditis elegans, this protein is Enolase.